Reading from the N-terminus, the 195-residue chain is Pyruvoyl-dependent arginine decarboxylase AaxB (195 aa).

Pyruvic acid (Ser) is present on serine 53.

Belongs to the pyruvoyl-dependent arginine decarboxylase family. As to quaternary structure, trimer of an alpha-beta dimer. Requires pyruvate as cofactor.

It localises to the cytoplasm. The catalysed reaction is L-arginine + H(+) = agmatine + CO2. In terms of biological role, part of the AaxABC system, catalyzes the decarboxylation of L-arginine. The arginine uptake by the bacterium in the macrophage may be a virulence factor against the host innate immune response. This Chlamydia caviae (strain ATCC VR-813 / DSM 19441 / 03DC25 / GPIC) (Chlamydophila caviae) protein is Pyruvoyl-dependent arginine decarboxylase AaxB (aaxB).